Consider the following 214-residue polypeptide: tRNA (guanine-N(7)-)-methyltransferase (214 aa).

S-adenosyl-L-methionine is bound by residues glutamate 44, glutamate 69, aspartate 96, and aspartate 118. Aspartate 118 is a catalytic residue. Residues lysine 122, aspartate 154, and 191–194 (TEYE) each bind substrate.

Belongs to the class I-like SAM-binding methyltransferase superfamily. TrmB family.

It catalyses the reaction guanosine(46) in tRNA + S-adenosyl-L-methionine = N(7)-methylguanosine(46) in tRNA + S-adenosyl-L-homocysteine. The protein operates within tRNA modification; N(7)-methylguanine-tRNA biosynthesis. Functionally, catalyzes the formation of N(7)-methylguanine at position 46 (m7G46) in tRNA. The protein is tRNA (guanine-N(7)-)-methyltransferase of Listeria welshimeri serovar 6b (strain ATCC 35897 / DSM 20650 / CCUG 15529 / CIP 8149 / NCTC 11857 / SLCC 5334 / V8).